Consider the following 221-residue polypeptide: GTP cyclohydrolase 1 (221 aa).

3 residues coordinate Zn(2+): C109, H112, and C180.

It belongs to the GTP cyclohydrolase I family. Toroid-shaped homodecamer, composed of two pentamers of five dimers.

It catalyses the reaction GTP + H2O = 7,8-dihydroneopterin 3'-triphosphate + formate + H(+). It participates in cofactor biosynthesis; 7,8-dihydroneopterin triphosphate biosynthesis; 7,8-dihydroneopterin triphosphate from GTP: step 1/1. The sequence is that of GTP cyclohydrolase 1 from Serratia proteamaculans (strain 568).